Reading from the N-terminus, the 33-residue chain is Brevinin-2HSb (33 aa).

Cys-27 and Cys-33 form a disulfide bridge.

Expressed by the skin glands.

Its subcellular location is the secreted. Its function is as follows. Has antibacterial activity against the Gram-positive bacterium S.aureus ATCC 25923 and the Gram-negative bacterium E.coli ATCC 25726. This chain is Brevinin-2HSb, found in Odorrana hosii (Hose's rock frog).